Consider the following 327-residue polypeptide: Undecaprenyl-phosphate 4-deoxy-4-formamido-L-arabinose transferase (327 aa).

Helical transmembrane passes span 235–255 (LLSLVGSAIALLGFTFSVLLV) and 270–290 (VFTLFAVLFMFIGAQFVGMGL).

Belongs to the glycosyltransferase 2 family.

The protein localises to the cell inner membrane. The enzyme catalyses UDP-4-deoxy-4-formamido-beta-L-arabinose + di-trans,octa-cis-undecaprenyl phosphate = 4-deoxy-4-formamido-alpha-L-arabinopyranosyl di-trans,octa-cis-undecaprenyl phosphate + UDP. It participates in glycolipid biosynthesis; 4-amino-4-deoxy-alpha-L-arabinose undecaprenyl phosphate biosynthesis; 4-amino-4-deoxy-alpha-L-arabinose undecaprenyl phosphate from UDP-4-deoxy-4-formamido-beta-L-arabinose and undecaprenyl phosphate: step 1/2. The protein operates within bacterial outer membrane biogenesis; lipopolysaccharide biosynthesis. Catalyzes the transfer of 4-deoxy-4-formamido-L-arabinose from UDP to undecaprenyl phosphate. The modified arabinose is attached to lipid A and is required for resistance to polymyxin and cationic antimicrobial peptides. The protein is Undecaprenyl-phosphate 4-deoxy-4-formamido-L-arabinose transferase of Yersinia pestis bv. Antiqua (strain Antiqua).